An 83-amino-acid polypeptide reads, in one-letter code: UPF0729 protein CBG02799 (83 aa).

A disordered region spans residues 51 to 83 (QEKKEEEEEKEKSCCSTEAENTTEVTTETKKDQ). Over residues 67 to 76 (TEAENTTEVT) the composition is skewed to low complexity.

This sequence belongs to the UPF0729 family.

In Caenorhabditis briggsae, this protein is UPF0729 protein CBG02799.